We begin with the raw amino-acid sequence, 248 residues long: 14-3-3-like protein 1 (248 aa).

It belongs to the 14-3-3 family. As to quaternary structure, interacts with daf-16 and sir-2.1. Interacts with atgl-1. Interacts with hcf-1.

It localises to the cytoplasm. The protein resides in the nucleus. Functionally, required to modulate lifespan, in concert with hcf-1, acting redundantly with 14-3-3-like protein ftt-2. This is 14-3-3-like protein 1 (par-5) from Caenorhabditis elegans.